The primary structure comprises 367 residues: Pre-small/secreted glycoprotein (367 aa).

Residues 1–33 (MGSGYQLLQLPRERFRKTSFLVWVIILFQRAIS) form the signal peptide. N-linked (GlcNAc...) asparagine; by host glycosylation is present at asparagine 41. Intrachain disulfides connect cysteine 109–cysteine 136 and cysteine 122–cysteine 148. 4 N-linked (GlcNAc...) asparagine; by host glycosylation sites follow: asparagine 205, asparagine 239, asparagine 258, and asparagine 269.

This sequence belongs to the filoviruses glycoprotein family. Homodimer; disulfide-linked. The homodimers are linked by two disulfide bonds in a parallel orientation. As to quaternary structure, monomer. In terms of processing, this precursor is processed into mature sGP and delta-peptide by host furin or furin-like proteases. The cleavage site corresponds to the furin optimal cleavage sequence [KR]-X-[KR]-R. N-glycosylated. Post-translationally, O-glycosylated.

The protein localises to the secreted. Functionally, seems to possess an anti-inflammatory activity as it can reverse the barrier-decreasing effects of TNF alpha. Might therefore contribute to the lack of inflammatory reaction seen during infection in spite the of extensive necrosis and massive virus production. Does not seem to be involved in activation of primary macrophages. Does not seem to interact specifically with neutrophils. Viroporin that permeabilizes mammalian cell plasma membranes. It acts by altering permeation of ionic compounds and small molecules. This activity may lead to viral enterotoxic activity. The protein is Pre-small/secreted glycoprotein (GP) of Reston ebolavirus (strain Siena/Philippine-92) (REBOV).